The chain runs to 348 residues: Guanosine ABC transporter permease protein NupP (348 aa).

Transmembrane regions (helical) follow at residues 8-28, 61-81, 85-105, 107-127, 136-156, 189-209, 237-257, 277-297, and 320-340; these read LLVP…IMLV, YILS…NIGV, LLVG…PAYI, LPLA…IPGI, EVIV…YIIS, LHLG…IINK, IMTS…MEGL, IAVA…ACLL, and IVIA…FVMG.

The protein belongs to the binding-protein-dependent transport system permease family. The complex is composed of two ATP-binding proteins (NupO), two transmembrane proteins (NupP and NupQ) and a solute-binding protein (NupN).

It is found in the cell membrane. Part of an ABC transporter complex involved in the uptake of guanosine. Responsible for the translocation of the substrate across the membrane. May be a nucleoside transporter of broad specificity but with various affinities for different substrates. The sequence is that of Guanosine ABC transporter permease protein NupP from Bacillus subtilis (strain 168).